Here is an 882-residue protein sequence, read N- to C-terminus: Leucine--tRNA ligase (882 aa).

The 'HIGH' region signature appears at 43–53 (PYPSGRIHMGH). Positions 634-638 (KMSKS) match the 'KMSKS' region motif. Residue lysine 637 coordinates ATP.

The protein belongs to the class-I aminoacyl-tRNA synthetase family.

It is found in the cytoplasm. The catalysed reaction is tRNA(Leu) + L-leucine + ATP = L-leucyl-tRNA(Leu) + AMP + diphosphate. The sequence is that of Leucine--tRNA ligase from Rhodopseudomonas palustris (strain BisB18).